The following is a 382-amino-acid chain: SAT4 family membrane protein (382 aa).

Positions 1–22 are disordered; sequence MFGAELVGRETGGQSTDQPYSY. Asn78 carries an N-linked (GlcNAc...) asparagine glycan. Transmembrane regions (helical) follow at residues 80–100 and 112–132; these read SQIL…LLYL and YLSI…NFFL. N-linked (GlcNAc...) asparagine glycosylation is present at Asn147. 3 consecutive transmembrane segments (helical) span residues 159–179, 192–212, and 228–248; these read ILVT…LPII, LGIS…IMRL, and WYTE…PTFF. Residue Asn269 is glycosylated (N-linked (GlcNAc...) asparagine).

The protein belongs to the SAT4 family.

The protein resides in the membrane. The sequence is that of SAT4 family membrane protein from Emericella nidulans (strain FGSC A4 / ATCC 38163 / CBS 112.46 / NRRL 194 / M139) (Aspergillus nidulans).